Here is a 94-residue protein sequence, read N- to C-terminus: Integration host factor subunit beta (94 aa).

Belongs to the bacterial histone-like protein family. In terms of assembly, heterodimer of an alpha and a beta chain.

Functionally, this protein is one of the two subunits of integration host factor, a specific DNA-binding protein that functions in genetic recombination as well as in transcriptional and translational control. In Ruegeria pomeroyi (strain ATCC 700808 / DSM 15171 / DSS-3) (Silicibacter pomeroyi), this protein is Integration host factor subunit beta.